We begin with the raw amino-acid sequence, 139 residues long: Succinate dehydrogenase assembly factor 2, mitochondrial (139 aa).

A mitochondrion-targeting transit peptide spans 1–28 (MLRKTNLSNITTLLRSARCMNRMPQLRF).

The protein belongs to the SDHAF2 family. In terms of assembly, interacts with the flavoprotein subunit within the SDH catalytic dimer.

The protein localises to the mitochondrion. The protein resides in the mitochondrion matrix. Its function is as follows. Plays an essential role in the assembly of succinate dehydrogenase (SDH), an enzyme complex (also referred to as respiratory complex II) that is a component of both the tricarboxylic acid (TCA) cycle and the mitochondrial electron transport chain, and which couples the oxidation of succinate to fumarate with the reduction of ubiquinone (coenzyme Q) to ubiquinol. Required for flavinylation (covalent attachment of FAD) of the flavoprotein subunit of the SDH catalytic dimer. The sequence is that of Succinate dehydrogenase assembly factor 2, mitochondrial from Schizosaccharomyces pombe (strain 972 / ATCC 24843) (Fission yeast).